Reading from the N-terminus, the 786-residue chain is LPS-assembly protein LptD (786 aa).

Residues 1 to 39 (MPPKPLFPNVFPGDGAPRKRRLALALLAVPGLVPAVSYA) form the signal peptide.

It belongs to the LptD family. As to quaternary structure, component of the lipopolysaccharide transport and assembly complex. Interacts with LptE and LptA.

The protein resides in the cell outer membrane. Its function is as follows. Together with LptE, is involved in the assembly of lipopolysaccharide (LPS) at the surface of the outer membrane. This Burkholderia ambifaria (strain ATCC BAA-244 / DSM 16087 / CCUG 44356 / LMG 19182 / AMMD) (Burkholderia cepacia (strain AMMD)) protein is LPS-assembly protein LptD.